Consider the following 651-residue polypeptide: Probable potassium transport system protein Kup (651 aa).

A run of 12 helical transmembrane segments spans residues 30-50 (LALA…LYSL), 71-91 (IISM…VIFV), 124-144 (LLLG…TPAI), 158-178 (PDAE…LFIV), 190-210 (FGPV…PWII), 233-253 (AMAF…EALY), 268-288 (WFGL…AMIL), 310-330 (LVTI…SGAF), 358-378 (IYIP…ILIF), 387-407 (AYGL…LVLA), 413-433 (WPMW…LSIF), and 437-457 (LLKI…VVII).

This sequence belongs to the HAK/KUP transporter (TC 2.A.72) family.

The protein resides in the cell membrane. The catalysed reaction is K(+)(in) + H(+)(in) = K(+)(out) + H(+)(out). Its function is as follows. Transport of potassium into the cell. Likely operates as a K(+):H(+) symporter. The chain is Probable potassium transport system protein Kup from Cutibacterium acnes (strain DSM 16379 / KPA171202) (Propionibacterium acnes).